The sequence spans 120 residues: Ribosome-binding factor A (120 aa).

Belongs to the RbfA family. Monomer. Binds 30S ribosomal subunits, but not 50S ribosomal subunits or 70S ribosomes.

It localises to the cytoplasm. One of several proteins that assist in the late maturation steps of the functional core of the 30S ribosomal subunit. Associates with free 30S ribosomal subunits (but not with 30S subunits that are part of 70S ribosomes or polysomes). Required for efficient processing of 16S rRNA. May interact with the 5'-terminal helix region of 16S rRNA. The sequence is that of Ribosome-binding factor A from Rickettsia felis (strain ATCC VR-1525 / URRWXCal2) (Rickettsia azadi).